Here is a 236-residue protein sequence, read N- to C-terminus: Glyoxalase 3 (236 aa).

Active-site residues include cysteine 136, histidine 137, and glutamate 168. Cysteine 136 carries the cysteine sulfinic acid (-SO2H) modification.

It belongs to the peptidase C56 family. HSP31-like subfamily. In terms of assembly, monomer.

The catalysed reaction is methylglyoxal + H2O = (R)-lactate + H(+). Catalyzes the conversion of methylglyoxal (MG) to D-lactate in a single glutathione (GSH)-independent step. Selective for MG, does not use glyoxal as substrate. Plays a role in detoxifying endogenously produced MG, particularly when glycerol is the principal carbon source. Important for viability in stationary phase. The sequence is that of Glyoxalase 3 from Candida albicans (strain SC5314 / ATCC MYA-2876) (Yeast).